Reading from the N-terminus, the 434-residue chain is Tyrosine-protein phosphatase non-receptor type 1 (434 aa).

The 275-residue stretch at 3 to 277 (IEKEFHRLDQ…RFSYLAVIEG (275 aa)) folds into the Tyrosine-protein phosphatase domain. At Ser-50 the chain carries Phosphoserine. Substrate-binding positions include Asp-181, 215–221 (CSAGIGR), and Gln-262. Cys-215 (phosphocysteine intermediate) is an active-site residue. Residues 291-319 (WKELSNEDLDPPPEHTPPPPRPPKRTSEM) are disordered.

It belongs to the protein-tyrosine phosphatase family. Non-receptor class 1 subfamily. Interacts with EPHA3 (phosphorylated); dephosphorylates EPHA3 and may regulate its trafficking and function. Interacts with MET. Interacts with NCK1. In terms of processing, phosphorylated on serine and threonine residues near the N-terminus by casein kinase II (CK2).

The protein localises to the endoplasmic reticulum membrane. The catalysed reaction is O-phospho-L-tyrosyl-[protein] + H2O = L-tyrosyl-[protein] + phosphate. Its function is as follows. May play an important role in CKII- and p60c-src-induced signal transduction cascades. May regulate the EFNA5-EPHA3 signaling pathway which modulates cell reorganization and cell-cell repulsion. May also regulate the hepatocyte growth factor receptor signaling pathway through dephosphorylation of MET. The polypeptide is Tyrosine-protein phosphatase non-receptor type 1 (PTPN1) (Gallus gallus (Chicken)).